The primary structure comprises 183 residues: Large ribosomal subunit protein uL22 (183 aa).

The segment at 163-183 is disordered; the sequence is KTAAKKQSAKKLKKQKMMYRE. The span at 165 to 183 shows a compositional bias: basic residues; it reads AAKKQSAKKLKKQKMMYRE.

Belongs to the universal ribosomal protein uL22 family.

This is Large ribosomal subunit protein uL22 (rpl-17) from Pectinaria gouldii (Trumpet worm).